The primary structure comprises 103 residues: Small ribosomal subunit protein uS10 (103 aa).

It belongs to the universal ribosomal protein uS10 family. In terms of assembly, part of the 30S ribosomal subunit.

In terms of biological role, involved in the binding of tRNA to the ribosomes. This chain is Small ribosomal subunit protein uS10, found in Vibrio campbellii (strain ATCC BAA-1116).